The sequence spans 174 residues: MLKGIILIVTIQLVNANFFGVFGKPLYNPFNKDKYMIDFITTFNKLMNMKQPQFPHPKSYPGFPPLFPGIKGKKSVFKTIDFTDMAPGSKKTFRVDNGQGIAFRSKSGNAGGMSFSSGTGGGKGFAFGGTLGGGSNGEFVMSQSGPGLKGGKVTYSKGVPKFAKGLFGMLPFFK.

Positions 1–16 (MLKGIILIVTIQLVNA) are cleaved as a signal peptide.

As to expression, component of the organic matrix of calcified shell layers like nacre and prisms.

The protein localises to the secreted. This is Mytilin-3 from Mytilus californianus (California mussel).